A 355-amino-acid chain; its full sequence is Anthranilate phosphoribosyltransferase (355 aa).

5-phospho-alpha-D-ribose 1-diphosphate contacts are provided by residues Gly-85, 88–89, Thr-93, 95–98, 113–121, and Ser-125; these read GD, NIST, and KHGNRAASS. Gly-85 contributes to the anthranilate binding site. Ser-97 contributes to the Mg(2+) binding site. An anthranilate-binding site is contributed by Asn-116. Anthranilate is bound at residue Arg-171. Mg(2+) contacts are provided by Asp-229 and Glu-230.

Belongs to the anthranilate phosphoribosyltransferase family. In terms of assembly, homodimer. The cofactor is Mg(2+).

The enzyme catalyses N-(5-phospho-beta-D-ribosyl)anthranilate + diphosphate = 5-phospho-alpha-D-ribose 1-diphosphate + anthranilate. It participates in amino-acid biosynthesis; L-tryptophan biosynthesis; L-tryptophan from chorismate: step 2/5. Functionally, catalyzes the transfer of the phosphoribosyl group of 5-phosphorylribose-1-pyrophosphate (PRPP) to anthranilate to yield N-(5'-phosphoribosyl)-anthranilate (PRA). The sequence is that of Anthranilate phosphoribosyltransferase from Acidothermus cellulolyticus (strain ATCC 43068 / DSM 8971 / 11B).